Here is a 316-residue protein sequence, read N- to C-terminus: Beta-ketoacyl-[acyl-carrier-protein] synthase III (316 aa).

Active-site residues include Cys-112 and His-243. The segment at Gln-244 to Arg-248 is ACP-binding. Asn-273 is a catalytic residue.

The protein belongs to the thiolase-like superfamily. FabH family. In terms of assembly, homodimer.

The protein localises to the cytoplasm. The enzyme catalyses malonyl-[ACP] + acetyl-CoA + H(+) = 3-oxobutanoyl-[ACP] + CO2 + CoA. It functions in the pathway lipid metabolism; fatty acid biosynthesis. In terms of biological role, catalyzes the condensation reaction of fatty acid synthesis by the addition to an acyl acceptor of two carbons from malonyl-ACP. Catalyzes the first condensation reaction which initiates fatty acid synthesis and may therefore play a role in governing the total rate of fatty acid production. Possesses both acetoacetyl-ACP synthase and acetyl transacylase activities. Its substrate specificity determines the biosynthesis of branched-chain and/or straight-chain of fatty acids. The chain is Beta-ketoacyl-[acyl-carrier-protein] synthase III from Histophilus somni (strain 2336) (Haemophilus somnus).